A 1072-amino-acid polypeptide reads, in one-letter code: E3 ubiquitin-protein ligase RNF31 (1072 aa).

Residues 1 to 485 (MPGEEEERAF…PEKQRQDKMR (485 aa)) are polyubiquitin-binding. Residues 71-142 (TLSTALNILE…SFPEGQEEPD (72 aa)) enclose the PUB domain. A disordered region spans residues 263–290 (QGTHLSPSLPASAQPRPQSTSLLALGDS). The segment covering 265–280 (THLSPSLPASAQPRPQ) has biased composition (polar residues). Residues 281–290 (STSLLALGDS) are compositionally biased toward low complexity. RanBP2-type zinc fingers lie at residues 299–329 (SAHL…PRGC) and 350–379 (ARGR…PRLA). A Phosphoserine modification is found at S383. The RanBP2-type 3 zinc-finger motif lies at 409 to 438 (QSQVWYCIHCTFCNSSPGWVCVMCNRTSSP). The segment at 443-484 (HAPRPYASSLEKGPPKPGPPRRLSAPLPSSCGDPEKQRQDKM) is disordered. Low complexity predominate over residues 463-472 (RRLSAPLPSS). S466 is modified (phosphoserine). Residues 475–484 (DPEKQRQDKM) are compositionally biased toward basic and acidic residues. Residues 563–616 (GNLDEAVEECVRTRRRKVQELQSLGFGPEEGSLQALFQHGGDVSRALTELQRQR) are interaction with RBCK1. One can recognise a UBA domain in the interval 564–615 (NLDEAVEECVRTRRRKVQELQSLGFGPEEGSLQALFQHGGDVSRALTELQRQ). The tract at residues 695 to 929 (LAQECAVCGW…KSLHGHHPRD (235 aa)) is TRIAD supradomain. Positions 699, 702, 717, 719, 722, and 725 each coordinate Zn(2+). The segment at 699–749 (CAVCGWALPHNRMQALTSCECTICPDCFRQHFTIALKEKHITDMVCPACGR) adopts an RING-type 1 zinc-finger fold. A (Microbial infection) Glycyl lysine isopeptide (Lys-Gly) (interchain with G-Cter in ubiquitin) cross-link involves residue K735. 2 residues coordinate Zn(2+): C744 and C747. The IBR-type zinc finger occupies 779 to 841 (ALFHKKLTEG…WEEQHRGRSC (63 aa)). Residue K783 forms a (Microbial infection) Glycyl lysine isopeptide (Lys-Gly) (interchain with G-Cter in ubiquitin) linkage. C799, C802, C817, C820, C825, C828, H836, C841, C871, and C874 together coordinate Zn(2+). An RING-type 2; atypical zinc finger spans residues 871-901 (CPKCKFSYALARGGCMHFHCTQCRHQFCSGC). A (Microbial infection) Glycyl lysine isopeptide (Lys-Gly) (interchain with G-Cter in ubiquitin) cross-link involves residue K875. C885 is an active-site residue. Positions 890, 893, 898, 901, 916, and 925 each coordinate Zn(2+). Residues 910 to 1072 (KCPEPNCRVK…LGQSIPRRRK (163 aa)) form an LDD domain region.

The protein belongs to the RBR family. As to quaternary structure, component of the LUBAC complex (linear ubiquitin chain assembly complex) which consists of SHARPIN, RBCK1 and RNF31. LUBAC has a MW of approximately 600 kDa suggesting a heteromultimeric assembly of its subunits. Associates with the TNF-R1 signaling complex (TNF-RSC) in a stimulation-dependent manner. Interacts (via the PUB domain) with OTULIN (via the PIM motif); the interaction is direct. Interacts (via the PUB domain) with VCP (via the PIM motif). Interacts (via the PUB domain) with SPATA2 (via the PIM motif); interaction is direct and bridges RNF31 and CYLD. Interacts with CYLD; the interaction is indirect and is mediated via SPATA2. Interacts with MUSK. Interacts with CARD11, promoting linear ubiquitination of BCL10. (Microbial infection) Interacts with S.flexneri E3 ubiquitin-protein ligases IpaH1.4 and IpaH2.5, leading to its ubiquitination. In terms of processing, autoubiquitinated. Interaction with OTULIN is required to suppress formation of 'Met-1'-linked polyubiquitin chains and prevent subsequent inactivation of the LUBAC complex. Cleaved by caspase during apoptosis. Post-translationally, (Microbial infection) Ubiquitinated by S.flexneri E3 ubiquitin-protein ligases IpaH1.4 and IpaH2.5, leading to its degradation by the proteasome, thereby preventing formation of the bacterial ubiquitin coat and activation of innate immunity. As to expression, expressed in both normal and transformed breast epithelial cell lines.

The protein resides in the cytoplasm. It catalyses the reaction [E2 ubiquitin-conjugating enzyme]-S-ubiquitinyl-L-cysteine + [acceptor protein]-L-lysine = [E2 ubiquitin-conjugating enzyme]-L-cysteine + [acceptor protein]-N(6)-ubiquitinyl-L-lysine.. It participates in protein modification; protein ubiquitination. Its function is as follows. E3 ubiquitin-protein ligase component of the LUBAC complex which conjugates linear ('Met-1'-linked) polyubiquitin chains to substrates and plays a key role in NF-kappa-B activation and regulation of inflammation. LUBAC conjugates linear polyubiquitin to IKBKG and RIPK1 and is involved in activation of the canonical NF-kappa-B and the JNK signaling pathways. Linear ubiquitination mediated by the LUBAC complex interferes with TNF-induced cell death and thereby prevents inflammation. LUBAC is recruited to the TNF-R1 signaling complex (TNF-RSC) following polyubiquitination of TNF-RSC components by BIRC2 and/or BIRC3 and to conjugate linear polyubiquitin to IKBKG and possibly other components contributing to the stability of the complex. The LUBAC complex is also involved in innate immunity by conjugating linear polyubiquitin chains at the surface of bacteria invading the cytosol to form the ubiquitin coat surrounding bacteria. LUBAC is not able to initiate formation of the bacterial ubiquitin coat, and can only promote formation of linear polyubiquitins on pre-existing ubiquitin. Recruited to the surface of bacteria by RNF213, which initiates the bacterial ubiquitin coat. The bacterial ubiquitin coat acts as an 'eat-me' signal for xenophagy and promotes NF-kappa-B activation. Together with OTULIN, the LUBAC complex regulates the canonical Wnt signaling during angiogenesis. RNF31 is required for linear ubiquitination of BCL10, thereby promoting TCR-induced NF-kappa-B activation. Binds polyubiquitin of different linkage types. This is E3 ubiquitin-protein ligase RNF31 from Homo sapiens (Human).